A 314-amino-acid chain; its full sequence is tRNA pseudouridine synthase B (314 aa).

The Nucleophile role is filled by Asp-41.

This sequence belongs to the pseudouridine synthase TruB family. Type 1 subfamily.

The catalysed reaction is uridine(55) in tRNA = pseudouridine(55) in tRNA. In terms of biological role, responsible for synthesis of pseudouridine from uracil-55 in the psi GC loop of transfer RNAs. The polypeptide is tRNA pseudouridine synthase B (Prochlorococcus marinus (strain NATL2A)).